Here is an 825-residue protein sequence, read N- to C-terminus: Taste receptor cell protein 1 (825 aa).

An N-terminal signal peptide occupies residues 1–21; that stretch reads MDKQWFPAAGILLAALLVVSA. Disordered regions lie at residues 66–97 and 299–322; these read EREP…GPSG and TSPS…SASP. Residues 302 to 322 show a composition bias toward low complexity; sequence SQASSLHSPRPSSASPLSASP.

Expression is restricted to circumvallate papillae.

This chain is Taste receptor cell protein 1 (Trcg1), found in Mus musculus (Mouse).